Here is an 84-residue protein sequence, read N- to C-terminus: Hepcidin (84 aa).

The signal sequence occupies residues 1–24; that stretch reads MALSSQIWAACLLLLLLLASLTSG. Residues 25–54 constitute a propeptide that is removed on maturation; the sequence is SVFPQQTGQLAELQPQDRAGARASWMPMFQ. 4 disulfide bridges follow: cysteine 66–cysteine 82, cysteine 69–cysteine 72, cysteine 70–cysteine 78, and cysteine 73–cysteine 81.

Belongs to the hepcidin family. In terms of assembly, interacts with SLC40A1; this interaction promotes SLC40A1 rapid ubiquitination. Highest expression in liver and to a lesser extent in heart and brain. Low levels in lung, tonsils, salivary gland, trachea, prostate gland, adrenal gland and thyroid gland. Secreted into the urine and blood. Expressed by hepatocytes.

The protein resides in the secreted. Liver-produced hormone that constitutes the main circulating regulator of iron absorption and distribution across tissues. Acts by promoting endocytosis and degradation of ferroportin/SLC40A1, leading to the retention of iron in iron-exporting cells and decreased flow of iron into plasma. Controls the major flows of iron into plasma: absorption of dietary iron in the intestine, recycling of iron by macrophages, which phagocytose old erythrocytes and other cells, and mobilization of stored iron from hepatocytes. In terms of biological role, has strong antimicrobial activity against E.coli ML35P N.cinerea and weaker against S.epidermidis, S.aureus and group b streptococcus bacteria. Active against the fungus C.albicans. No activity against P.aeruginosa. This chain is Hepcidin, found in Homo sapiens (Human).